Consider the following 585-residue polypeptide: A-type ATP synthase subunit A (585 aa).

Residue 237–244 participates in ATP binding; that stretch reads GPFGSGKT.

The protein belongs to the ATPase alpha/beta chains family. As to quaternary structure, has multiple subunits with at least A(3), B(3), C, D, E, F, H, I and proteolipid K(x).

The protein localises to the cell membrane. It carries out the reaction ATP + H2O + 4 H(+)(in) = ADP + phosphate + 5 H(+)(out). Functionally, component of the A-type ATP synthase that produces ATP from ADP in the presence of a proton gradient across the membrane. The A chain is the catalytic subunit. In Natronomonas pharaonis (strain ATCC 35678 / DSM 2160 / CIP 103997 / JCM 8858 / NBRC 14720 / NCIMB 2260 / Gabara) (Halobacterium pharaonis), this protein is A-type ATP synthase subunit A.